The chain runs to 395 residues: NAD(P)H-quinone oxidoreductase subunit H (395 aa).

It belongs to the complex I 49 kDa subunit family. NDH-1 can be composed of about 15 different subunits; different subcomplexes with different compositions have been identified which probably have different functions.

It is found in the cellular thylakoid membrane. It carries out the reaction a plastoquinone + NADH + (n+1) H(+)(in) = a plastoquinol + NAD(+) + n H(+)(out). It catalyses the reaction a plastoquinone + NADPH + (n+1) H(+)(in) = a plastoquinol + NADP(+) + n H(+)(out). Functionally, NDH-1 shuttles electrons from an unknown electron donor, via FMN and iron-sulfur (Fe-S) centers, to quinones in the respiratory and/or the photosynthetic chain. The immediate electron acceptor for the enzyme in this species is believed to be plastoquinone. Couples the redox reaction to proton translocation, and thus conserves the redox energy in a proton gradient. Cyanobacterial NDH-1 also plays a role in inorganic carbon-concentration. This Prochlorococcus marinus (strain MIT 9312) protein is NAD(P)H-quinone oxidoreductase subunit H.